We begin with the raw amino-acid sequence, 117 residues long: UPF0342 protein lmo2223 (117 aa).

This sequence belongs to the UPF0342 family.

The polypeptide is UPF0342 protein lmo2223 (Listeria monocytogenes serovar 1/2a (strain ATCC BAA-679 / EGD-e)).